The chain runs to 526 residues: Tyrosine 2,3-aminomutase (526 aa).

The active-site Proton donor/acceptor is the Tyr-41. His-71 provides a ligand contact to substrate. The 5-imidazolinone (Ala-Gly) cross-link spans 130–132; that stretch reads ASG. Ser-131 carries the 2,3-didehydroalanine (Ser) modification. Positions 183 and 288 each coordinate substrate.

Belongs to the TAL/TAM family. As to quaternary structure, homotetramer; dimer of dimers. Post-translationally, contains an active site 4-methylidene-imidazol-5-one (MIO), which is formed autocatalytically by cyclization and dehydration of residues Ala-Ser-Gly.

The catalysed reaction is L-tyrosine = 3-amino-3-(4-hydroxyphenyl)propanoate. It carries out the reaction L-tyrosine = (E)-4-coumarate + NH4(+). Functionally, has aminomutase and, to a much lesser extent, ammonia-lyase activity. Primarily, catalyzes the rearrangement of L-tyrosine to S-beta-tyrosine, which is probably incorporated into secondary metabolite myxovalargin. The aminomutase activity exclusively produces S-beta-tyrosine. The sequence is that of Tyrosine 2,3-aminomutase from Myxococcus fulvus.